Consider the following 526-residue polypeptide: Exodeoxyribonuclease 7 large subunit (526 aa).

A disordered region spans residues 497–526; sequence AMTTEGGTPPAGAKKRSTKPAEPPKQGSLF.

The protein belongs to the XseA family. As to quaternary structure, heterooligomer composed of large and small subunits.

It is found in the cytoplasm. It catalyses the reaction Exonucleolytic cleavage in either 5'- to 3'- or 3'- to 5'-direction to yield nucleoside 5'-phosphates.. Bidirectionally degrades single-stranded DNA into large acid-insoluble oligonucleotides, which are then degraded further into small acid-soluble oligonucleotides. The sequence is that of Exodeoxyribonuclease 7 large subunit from Rhizobium johnstonii (strain DSM 114642 / LMG 32736 / 3841) (Rhizobium leguminosarum bv. viciae).